Consider the following 231-residue polypeptide: Large ribosomal subunit protein uL1 (231 aa).

This sequence belongs to the universal ribosomal protein uL1 family. In terms of assembly, part of the 50S ribosomal subunit.

In terms of biological role, binds directly to 23S rRNA. The L1 stalk is quite mobile in the ribosome, and is involved in E site tRNA release. Its function is as follows. Protein L1 is also a translational repressor protein, it controls the translation of the L11 operon by binding to its mRNA. This chain is Large ribosomal subunit protein uL1, found in Pseudomonas savastanoi pv. phaseolicola (strain 1448A / Race 6) (Pseudomonas syringae pv. phaseolicola (strain 1448A / Race 6)).